The following is a 245-amino-acid chain: tRNA1(Val) (adenine(37)-N6)-methyltransferase (245 aa).

The protein belongs to the methyltransferase superfamily. tRNA (adenine-N(6)-)-methyltransferase family.

The protein resides in the cytoplasm. The catalysed reaction is adenosine(37) in tRNA1(Val) + S-adenosyl-L-methionine = N(6)-methyladenosine(37) in tRNA1(Val) + S-adenosyl-L-homocysteine + H(+). Specifically methylates the adenine in position 37 of tRNA(1)(Val) (anticodon cmo5UAC). The sequence is that of tRNA1(Val) (adenine(37)-N6)-methyltransferase from Enterobacter sp. (strain 638).